The following is a 173-amino-acid chain: Large ribosomal subunit protein uL10 (173 aa).

It belongs to the universal ribosomal protein uL10 family. In terms of assembly, part of the ribosomal stalk of the 50S ribosomal subunit. The N-terminus interacts with L11 and the large rRNA to form the base of the stalk. The C-terminus forms an elongated spine to which L12 dimers bind in a sequential fashion forming a multimeric L10(L12)X complex.

Functionally, forms part of the ribosomal stalk, playing a central role in the interaction of the ribosome with GTP-bound translation factors. This chain is Large ribosomal subunit protein uL10, found in Oleidesulfovibrio alaskensis (strain ATCC BAA-1058 / DSM 17464 / G20) (Desulfovibrio alaskensis).